The following is a 646-amino-acid chain: Threonine--tRNA ligase (646 aa).

Residues 1–61 (MIKITFPDGN…NEDSNFEIVT (61 aa)) form the TGS domain. A catalytic region spans residues 242-540 (DHRKLGRELD…LIEVYKGAFP (299 aa)). Residues C336, H387, and H517 each contribute to the Zn(2+) site.

The protein belongs to the class-II aminoacyl-tRNA synthetase family. As to quaternary structure, homodimer. Zn(2+) serves as cofactor.

Its subcellular location is the cytoplasm. The enzyme catalyses tRNA(Thr) + L-threonine + ATP = L-threonyl-tRNA(Thr) + AMP + diphosphate + H(+). In terms of biological role, catalyzes the attachment of threonine to tRNA(Thr) in a two-step reaction: L-threonine is first activated by ATP to form Thr-AMP and then transferred to the acceptor end of tRNA(Thr). Also edits incorrectly charged L-seryl-tRNA(Thr). This Lactococcus lactis subsp. lactis (strain IL1403) (Streptococcus lactis) protein is Threonine--tRNA ligase.